A 184-amino-acid chain; its full sequence is MPVKFDATTIIAISHNGENAMAGDGQVTMGEKFIMKGTARKVRRIYDGKVIVGFAGSVADAFNLEEKFEKKLSEYSGNLQRASVELAKIWRGDQQLQKLEAMLIVMDEKEMYLVSGSGEVIAPDDGILAIGSGGNFALAAAKALKKHATQVSAKEMAKTAINVAGDIDIFTNHNVIALDFKEED.

Residue Thr8 is part of the active site. Positions 165, 168, and 171 each coordinate Na(+).

It belongs to the peptidase T1B family. HslV subfamily. As to quaternary structure, a double ring-shaped homohexamer of HslV is capped on each side by a ring-shaped HslU homohexamer. The assembly of the HslU/HslV complex is dependent on binding of ATP.

Its subcellular location is the cytoplasm. The catalysed reaction is ATP-dependent cleavage of peptide bonds with broad specificity.. Allosterically activated by HslU binding. Protease subunit of a proteasome-like degradation complex believed to be a general protein degrading machinery. The sequence is that of ATP-dependent protease subunit HslV from Pediococcus pentosaceus (strain ATCC 25745 / CCUG 21536 / LMG 10740 / 183-1w).